A 281-amino-acid chain; its full sequence is Probable catechol O-methyltransferase 2 (281 aa).

The S-adenosyl-L-methionine site is built by isoleucine 78, glutamate 100, serine 108, glutamate 127, valine 128, alanine 156, and aspartate 183. Mg(2+) is bound at residue aspartate 183. Lysine 186 contributes to the substrate binding site. Aspartate 211 and asparagine 212 together coordinate Mg(2+). Asparagine 212 provides a ligand contact to substrate.

The protein belongs to the class I-like SAM-binding methyltransferase superfamily. Cation-dependent O-methyltransferase family. The cofactor is Mg(2+).

Its subcellular location is the vacuole. It carries out the reaction a catechol + S-adenosyl-L-methionine = a guaiacol + S-adenosyl-L-homocysteine + H(+). This is Probable catechol O-methyltransferase 2 from Schizosaccharomyces pombe (strain 972 / ATCC 24843) (Fission yeast).